Here is a 595-residue protein sequence, read N- to C-terminus: FERM domain-containing protein 3 (595 aa).

The region spanning 32–312 (MKCTIRLLDD…ENQAFYKYAK (281 aa)) is the FERM domain. A helical transmembrane segment spans residues 529–549 (LLVVGLGLLLFVFPLLLLLLE).

It localises to the membrane. Functionally, putative tumor suppressor gene that may be implicated in the origin and progression of lung cancer. This chain is FERM domain-containing protein 3 (Frmd3), found in Mus musculus (Mouse).